The primary structure comprises 1207 residues: Chromosomal serine/threonine-protein kinase JIL-1 (1207 aa).

Over residues 1-19 (MSRLQKQNYEILSGTSTSR) the composition is skewed to polar residues. 3 disordered regions span residues 1–119 (MSRL…ASAR), 164–183 (QDME…SSSL), and 210–230 (SSST…LDLD). Phosphoserine is present on residues serine 29 and serine 31. Positions 45 to 69 (LNGQLVANGNGKTRKNSNSETMTNG) are enriched in polar residues. Positions 88-97 (NYNNNNNNNN) are enriched in low complexity. Over residues 98 to 108 (SISATNGQYTN) the composition is skewed to polar residues. The span at 109–118 (SSSKTTSASA) shows a compositional bias: low complexity. Acidic residues predominate over residues 164-178 (QDMEEDEPNGIEIDE). The span at 213–226 (TTPSYAMPTSNSTP) shows a compositional bias: polar residues. In terms of domain architecture, Protein kinase 1 spans 261–530 (FKIIRVLGTG…ASEIKEHPFF (270 aa)). Residues 267-275 (LGTGAYGRV) and lysine 293 each bind ATP. The active-site Proton acceptor is the aspartate 389. Serine 424 bears the Phosphoserine mark. Residues 531–599 (NGINWQELRT…VAPEHLEQMR (69 aa)) enclose the AGC-kinase C-terminal domain. A Phosphothreonine modification is found at threonine 588. The Protein kinase 2 domain maps to 623–886 (LELGTRTSNG…LSDILDSEWL (264 aa)). ATP is bound by residues 629-637 (TSNGAYGTC) and lysine 652. The active-site Proton acceptor is the aspartate 739. Threonine 1045 is modified (phosphothreonine). Serine 1047 carries the post-translational modification Phosphoserine. The disordered stretch occupies residues 1168 to 1197 (TFPRPKAQLKRTKREPKVPRPPTRVQPERA).

It belongs to the protein kinase superfamily. Ser/Thr protein kinase family. As to quaternary structure, interacts with lola. Interacts with proteins of the male specific lethal (MSL) dosage compensation complex; this interaction is mediated by the kinase domains. It depends on Mg(2+) as a cofactor. Post-translationally, autophosphorylated in vitro.

It localises to the nucleus. It is found in the chromosome. The enzyme catalyses L-seryl-[protein] + ATP = O-phospho-L-seryl-[protein] + ADP + H(+). The catalysed reaction is L-threonyl-[protein] + ATP = O-phospho-L-threonyl-[protein] + ADP + H(+). In terms of biological role, phosphorylates 'Ser-10' of histone H3. May regulate gene expression by establishing or maintaining the structure of more open chromatin regions. Also required for normal polytene chromosome structure, for oogenesis and for viability throughout development. Regulates the structure of polytene chromosomes in salivary glands. May phosphorylate 'Ser-1' of histone H2A. This chain is Chromosomal serine/threonine-protein kinase JIL-1, found in Drosophila melanogaster (Fruit fly).